The chain runs to 146 residues: NADH-quinone oxidoreductase subunit A (146 aa).

The next 3 membrane-spanning stretches (helical) occupy residues 14-34 (FGLFLIIAVGLCVFMLTGGFL), 68-88 (LVAMFFVIFDVEALYLYAWAV), and 96-116 (IGFIEATIFILVLLAGLIYLV).

Belongs to the complex I subunit 3 family. As to quaternary structure, NDH-1 is composed of 13 different subunits. Subunits NuoA, H, J, K, L, M, N constitute the membrane sector of the complex.

The protein localises to the cell inner membrane. The catalysed reaction is a quinone + NADH + 5 H(+)(in) = a quinol + NAD(+) + 4 H(+)(out). Functionally, NDH-1 shuttles electrons from NADH, via FMN and iron-sulfur (Fe-S) centers, to quinones in the respiratory chain. The immediate electron acceptor for the enzyme in this species is believed to be ubiquinone. Couples the redox reaction to proton translocation (for every two electrons transferred, four hydrogen ions are translocated across the cytoplasmic membrane), and thus conserves the redox energy in a proton gradient. The chain is NADH-quinone oxidoreductase subunit A from Pectobacterium carotovorum subsp. carotovorum (Erwinia carotovora subsp. carotovora).